A 434-amino-acid polypeptide reads, in one-letter code: Adenylosuccinate synthetase (434 aa).

GTP contacts are provided by residues 11–17 (GDEGKGK) and 39–41 (GHT). Asp12 functions as the Proton acceptor in the catalytic mechanism. Mg(2+) contacts are provided by Asp12 and Gly39. IMP is bound by residues 12–15 (DEGK), 37–40 (NAGH), Thr134, Arg148, Asn230, Thr245, and Arg309. Residue His40 is the Proton donor of the active site. 305-311 (VTTGRKR) lines the substrate pocket. GTP-binding positions include Arg311, 337-339 (KLD), and 419-421 (GTG).

Belongs to the adenylosuccinate synthetase family. As to quaternary structure, homodimer. It depends on Mg(2+) as a cofactor.

It is found in the cytoplasm. The catalysed reaction is IMP + L-aspartate + GTP = N(6)-(1,2-dicarboxyethyl)-AMP + GDP + phosphate + 2 H(+). It participates in purine metabolism; AMP biosynthesis via de novo pathway; AMP from IMP: step 1/2. Its function is as follows. Plays an important role in the de novo pathway and in the salvage pathway of purine nucleotide biosynthesis. Catalyzes the first committed step in the biosynthesis of AMP from IMP. This Lachancea thermotolerans (strain ATCC 56472 / CBS 6340 / NRRL Y-8284) (Yeast) protein is Adenylosuccinate synthetase.